The following is a 255-amino-acid chain: Hydroxyacylglutathione hydrolase (255 aa).

Positions 56, 58, 60, 61, 114, 133, and 171 each coordinate Zn(2+).

Belongs to the metallo-beta-lactamase superfamily. Glyoxalase II family. In terms of assembly, monomer. Zn(2+) is required as a cofactor.

It catalyses the reaction an S-(2-hydroxyacyl)glutathione + H2O = a 2-hydroxy carboxylate + glutathione + H(+). The protein operates within secondary metabolite metabolism; methylglyoxal degradation; (R)-lactate from methylglyoxal: step 2/2. Its function is as follows. Thiolesterase that catalyzes the hydrolysis of S-D-lactoyl-glutathione to form glutathione and D-lactic acid. In Cereibacter sphaeroides (strain ATCC 17029 / ATH 2.4.9) (Rhodobacter sphaeroides), this protein is Hydroxyacylglutathione hydrolase.